A 63-amino-acid polypeptide reads, in one-letter code: Large ribosomal subunit protein bL28 (63 aa).

It belongs to the bacterial ribosomal protein bL28 family.

In Selenomonas ruminantium, this protein is Large ribosomal subunit protein bL28 (rpmB).